The sequence spans 73 residues: Protein F9 homolog (73 aa).

Residues 1-34 (GHAAANCALARVATALTRRVPASRHGLAEGGTPP) lie on the Virion surface side of the membrane. The chain crosses the membrane as a helical span at residues 35 to 55 (WTLLLAVAAVTVLGVVAVSLL). Residues 56–73 (RRALRVRYRFARPAALRA) lie on the Intravirion side of the membrane.

Belongs to the chordopoxvirinae L1 protein family.

It localises to the virion membrane. In Capra hircus (Goat), this protein is Protein F9 homolog.